A 116-amino-acid polypeptide reads, in one-letter code: Large ribosomal subunit protein bL17 (116 aa).

Belongs to the bacterial ribosomal protein bL17 family. As to quaternary structure, part of the 50S ribosomal subunit. Contacts protein L32.

This Sulfurimonas denitrificans (strain ATCC 33889 / DSM 1251) (Thiomicrospira denitrificans (strain ATCC 33889 / DSM 1251)) protein is Large ribosomal subunit protein bL17.